The primary structure comprises 417 residues: 4-hydroxy-3-methylbut-2-en-1-yl diphosphate synthase (flavodoxin) (417 aa).

Cysteine 305, cysteine 308, cysteine 351, and glutamate 358 together coordinate [4Fe-4S] cluster.

It belongs to the IspG family. [4Fe-4S] cluster serves as cofactor.

The enzyme catalyses (2E)-4-hydroxy-3-methylbut-2-enyl diphosphate + oxidized [flavodoxin] + H2O + 2 H(+) = 2-C-methyl-D-erythritol 2,4-cyclic diphosphate + reduced [flavodoxin]. It participates in isoprenoid biosynthesis; isopentenyl diphosphate biosynthesis via DXP pathway; isopentenyl diphosphate from 1-deoxy-D-xylulose 5-phosphate: step 5/6. Converts 2C-methyl-D-erythritol 2,4-cyclodiphosphate (ME-2,4cPP) into 1-hydroxy-2-methyl-2-(E)-butenyl 4-diphosphate. The polypeptide is 4-hydroxy-3-methylbut-2-en-1-yl diphosphate synthase (flavodoxin) (Nitrosomonas europaea (strain ATCC 19718 / CIP 103999 / KCTC 2705 / NBRC 14298)).